The following is a 231-amino-acid chain: Heptaprenylglyceryl phosphate synthase (231 aa).

Lysine 12 serves as a coordination point for sn-glycerol 1-phosphate. Mg(2+) is bound by residues aspartate 14 and threonine 40. Residues 159–164 (YLEYSG), glycine 189, and 209–210 (GN) contribute to the sn-glycerol 1-phosphate site.

This sequence belongs to the GGGP/HepGP synthase family. Group I subfamily. Homodimer. Mg(2+) is required as a cofactor.

It catalyses the reaction sn-glycerol 1-phosphate + all-trans-heptaprenyl diphosphate = 3-heptaprenyl-sn-glycero-1-phosphate + diphosphate. The protein operates within membrane lipid metabolism; glycerophospholipid metabolism. In terms of biological role, prenyltransferase that catalyzes in vivo the transfer of the heptaprenyl moiety of heptaprenyl pyrophosphate (HepPP; 35 carbon atoms) to the C3 hydroxyl of sn-glycerol-1-phosphate (G1P), producing heptaprenylglyceryl phosphate (HepGP). This reaction is an ether-bond-formation step in the biosynthesis of archaea-type G1P-based membrane lipids found in Bacillales. This Staphylococcus haemolyticus (strain JCSC1435) protein is Heptaprenylglyceryl phosphate synthase.